A 404-amino-acid polypeptide reads, in one-letter code: 8-amino-7-oxononanoate synthase (404 aa).

A substrate-binding site is contributed by R20. 116 to 117 (GY) serves as a coordination point for pyridoxal 5'-phosphate. H141 provides a ligand contact to substrate. Pyridoxal 5'-phosphate contacts are provided by S187, H215, and T243. An N6-(pyridoxal phosphate)lysine modification is found at K246. T366 is a binding site for substrate.

Belongs to the class-II pyridoxal-phosphate-dependent aminotransferase family. BioF subfamily. As to quaternary structure, homodimer. Requires pyridoxal 5'-phosphate as cofactor.

The catalysed reaction is 6-carboxyhexanoyl-[ACP] + L-alanine + H(+) = (8S)-8-amino-7-oxononanoate + holo-[ACP] + CO2. The protein operates within cofactor biosynthesis; biotin biosynthesis. Catalyzes the decarboxylative condensation of pimeloyl-[acyl-carrier protein] and L-alanine to produce 8-amino-7-oxononanoate (AON), [acyl-carrier protein], and carbon dioxide. The chain is 8-amino-7-oxononanoate synthase from Cupriavidus taiwanensis (strain DSM 17343 / BCRC 17206 / CCUG 44338 / CIP 107171 / LMG 19424 / R1) (Ralstonia taiwanensis (strain LMG 19424)).